Consider the following 425-residue polypeptide: [Pyruvate dehydrogenase (acetyl-transferring)] kinase, mitochondrial (425 aa).

His178 is subject to Phosphohistidine; by autocatalysis. A Histidine kinase domain is found at 180-418 (NVAVEIALDI…DVYIHLNRLC (239 aa)). Residues 296-303 (EILKNSLR), Asp336, 355-356 (TT), and 379-384 (GFGFGL) each bind ATP.

This sequence belongs to the PDK/BCKDK protein kinase family.

It localises to the mitochondrion matrix. It catalyses the reaction L-seryl-[pyruvate dehydrogenase E1 alpha subunit] + ATP = O-phospho-L-seryl-[pyruvate dehydrogenase E1 alpha subunit] + ADP + H(+). Inhibits the mitochondrial pyruvate dehydrogenase complex by phosphorylation of the E1 alpha subunit, thus contributing to the regulation of glucose metabolism. In Schizosaccharomyces pombe (strain 972 / ATCC 24843) (Fission yeast), this protein is [Pyruvate dehydrogenase (acetyl-transferring)] kinase, mitochondrial (pkp1).